Consider the following 619-residue polypeptide: Eukaryotic translation initiation factor 2-alpha kinase 1 (619 aa).

The disordered stretch occupies residues 1-40 (MLGGSSVDGERDTDDDAAGAVAAPPAIDFPAEVSDPKYDE). The span at 18–28 (AGAVAAPPAID) shows a compositional bias: low complexity. The SIFI-degron motif lies at 85–104 (LHSKQVFKLLCQTFIKMGLL). The Protein kinase domain occupies 167–580 (FEELAILGKG…ALQLLQSELF (414 aa)). Residues 173 to 181 (LGKGGYGRV) and lysine 196 each bind ATP. Threonine 283 is modified (phosphothreonine). The HRM 1 repeat unit spans residues 408–413 (ACPYVM). The Proton acceptor role is filled by aspartate 440. Phosphothreonine; by autocatalysis occurs at positions 483, 485, and 490. An HRM 2 repeat occupies 549–554 (RCPVQA).

The protein belongs to the protein kinase superfamily. Ser/Thr protein kinase family. GCN2 subfamily. As to quaternary structure, synthesized in an inactive form that binds to the N-terminal domain of CDC37. Has to be associated with a multiprotein complex containing Hsp90, CDC37 and PPP5C for maturation and activation by autophosphorylation. The phosphatase PPP5C modulates this activation. Homodimer; homodimerizes in presence of heme, forming a disulfide-linked inactive homodimer. Interacts with DELE1; binds both to full-length DELE1 and processed form of DELE1 (S-DELE1) in response to stress, leading to activate its protein kinase activity and trigger the integrated stress response (ISR). In terms of processing, activated by autophosphorylation; phosphorylated predominantly on serine and threonine residues, but also on tyrosine residues. Autophosphorylation at Thr-485 is required for kinase activation. The active autophosphorylated form apparently is largely refractory to cellular heme fluctuations. Ubiquitinated and degraded by the SIFI complex once the mitochondrial stress has been resolved, thereby providing stress response silencing. Within the SIFI complex, UBR4 initiates ubiquitin chain that are further elongated or branched by KCMF1. In terms of tissue distribution, expressed predominantly in erythroid cells, mature reticulocytes, as well as fetal liver nucleated erythroid cells. At much lower levels, expressed in hepatocytes and bone marrow-derived macrophages (at protein level).

The protein resides in the cytoplasm. The catalysed reaction is L-seryl-[protein] + ATP = O-phospho-L-seryl-[protein] + ADP + H(+). The enzyme catalyses L-threonyl-[protein] + ATP = O-phospho-L-threonyl-[protein] + ADP + H(+). Its activity is regulated as follows. In normal conditions, the protein kinase activity is inhibited; inhibition is relieved by various stress conditions. Inhibited by heme: in presence of heme, forms a disulfide-linked inactive homodimer. Heme depletion relieves inhibition and stimulates kinase activity by autophosphorylation. Inhibited by the heme metabolites biliverdin and bilirubin. Induced by oxidative stress generated by arsenite treatment. Binding of nitric oxide (NO) to the heme iron in the N-terminal heme-binding domain activates the kinase activity, while binding of carbon monoxide (CO) suppresses kinase activity. Protein kinase activity is also activated upon binding to DELE1 in response to various stress, triggering the integrated stress response (ISR): activated by full-length DELE1 in response to iron deficiency, while it is activated by the processed form of DELE1 (S-DELE1) in response to mitochondrial stress. Metabolic-stress sensing protein kinase that phosphorylates the alpha subunit of eukaryotic translation initiation factor 2 (EIF2S1/eIF-2-alpha) in response to various stress conditions. Key activator of the integrated stress response (ISR) required for adaptation to various stress, such as heme deficiency, oxidative stress, osmotic shock, mitochondrial dysfunction and heat shock. EIF2S1/eIF-2-alpha phosphorylation in response to stress converts EIF2S1/eIF-2-alpha in a global protein synthesis inhibitor, leading to a global attenuation of cap-dependent translation, while concomitantly initiating the preferential translation of ISR-specific mRNAs, such as the transcriptional activator ATF4, and hence allowing ATF4-mediated reprogramming. Acts as a key sensor of heme-deficiency: in normal conditions, binds hemin via a cysteine thiolate and histidine nitrogenous coordination, leading to inhibit the protein kinase activity. This binding occurs with moderate affinity, allowing it to sense the heme concentration within the cell: heme depletion relieves inhibition and stimulates kinase activity, activating the ISR. Thanks to this unique heme-sensing capacity, plays a crucial role to shut off protein synthesis during acute heme-deficient conditions. In red blood cells (RBCs), controls hemoglobin synthesis ensuring a coordinated regulation of the synthesis of its heme and globin moieties. It thereby plays an essential protective role for RBC survival in anemias of iron deficiency. Iron deficiency also triggers activation by full-length DELE1. Also activates the ISR in response to mitochondrial dysfunction: HRI/EIF2AK1 protein kinase activity is activated upon binding to the processed form of DELE1 (S-DELE1), thereby promoting the ATF4-mediated reprogramming. Also acts as an activator of mitophagy in response to mitochondrial damage: catalyzes phosphorylation of eIF-2-alpha (EIF2S1) following activation by S-DELE1, thereby promoting mitochondrial localization of EIF2S1, triggering PRKN-independent mitophagy. This Mus musculus (Mouse) protein is Eukaryotic translation initiation factor 2-alpha kinase 1.